The chain runs to 653 residues: tRNA 5-methylaminomethyl-2-thiouridine biosynthesis bifunctional protein MnmC (653 aa).

Residues 1–233 (MKTAPITPGR…KRDITVARFT (233 aa)) form a tRNA (mnm(5)s(2)U34)-methyltransferase region. Residues 258–653 (IGAGLAGCAA…YALPRWRSDS (396 aa)) form an FAD-dependent cmnm(5)s(2)U34 oxidoreductase region.

It in the N-terminal section; belongs to the methyltransferase superfamily. tRNA (mnm(5)s(2)U34)-methyltransferase family. The protein in the C-terminal section; belongs to the DAO family. It depends on FAD as a cofactor.

The protein resides in the cytoplasm. It catalyses the reaction 5-aminomethyl-2-thiouridine(34) in tRNA + S-adenosyl-L-methionine = 5-methylaminomethyl-2-thiouridine(34) in tRNA + S-adenosyl-L-homocysteine + H(+). In terms of biological role, catalyzes the last two steps in the biosynthesis of 5-methylaminomethyl-2-thiouridine (mnm(5)s(2)U) at the wobble position (U34) in tRNA. Catalyzes the FAD-dependent demodification of cmnm(5)s(2)U34 to nm(5)s(2)U34, followed by the transfer of a methyl group from S-adenosyl-L-methionine to nm(5)s(2)U34, to form mnm(5)s(2)U34. The chain is tRNA 5-methylaminomethyl-2-thiouridine biosynthesis bifunctional protein MnmC from Methylibium petroleiphilum (strain ATCC BAA-1232 / LMG 22953 / PM1).